A 296-amino-acid chain; its full sequence is 4-hydroxybenzoate octaprenyltransferase (296 aa).

8 helical membrane passes run 28–48 (PIGI…AGNG), 55–75 (VLIF…INDF), 102–122 (AVML…CTNA), 145–167 (TYYP…FTAA), 174–196 (SAWL…YAMV), 219–239 (VIIL…GNRF), 241–261 (LGGW…WEFW), and 275–295 (FLHN…DYAL).

The protein belongs to the UbiA prenyltransferase family. Mg(2+) is required as a cofactor.

The protein localises to the cell inner membrane. The enzyme catalyses all-trans-octaprenyl diphosphate + 4-hydroxybenzoate = 4-hydroxy-3-(all-trans-octaprenyl)benzoate + diphosphate. The protein operates within cofactor biosynthesis; ubiquinone biosynthesis. In terms of biological role, catalyzes the prenylation of para-hydroxybenzoate (PHB) with an all-trans polyprenyl group. Mediates the second step in the final reaction sequence of ubiquinone-8 (UQ-8) biosynthesis, which is the condensation of the polyisoprenoid side chain with PHB, generating the first membrane-bound Q intermediate 3-octaprenyl-4-hydroxybenzoate. The polypeptide is 4-hydroxybenzoate octaprenyltransferase (Pseudomonas entomophila (strain L48)).